We begin with the raw amino-acid sequence, 523 residues long: uncharacterized protein (523 aa).

Positions R193–R447 constitute a Radical SAM core domain. Positions 212, 220, and 223 each coordinate [4Fe-4S] cluster.

The cofactor is [4Fe-4S] cluster.

This is an uncharacterized protein from Methanopyrus kandleri (strain AV19 / DSM 6324 / JCM 9639 / NBRC 100938).